The sequence spans 262 residues: GTP cyclohydrolase 1 type 2 homolog (262 aa).

The a divalent metal cation site is built by His65, Asp102, His222, and Glu225.

Belongs to the GTP cyclohydrolase I type 2/NIF3 family. In terms of assembly, homohexamer.

This is GTP cyclohydrolase 1 type 2 homolog from Streptococcus pyogenes serotype M3 (strain ATCC BAA-595 / MGAS315).